A 762-amino-acid polypeptide reads, in one-letter code: 5-methyltetrahydropteroyltriglutamate--homocysteine methyltransferase (762 aa).

5-methyltetrahydropteroyltri-L-glutamate is bound by residues 17 to 20 (REWK) and Lys111. Residues 435–437 (IGS) and Glu488 each bind L-homocysteine. L-methionine-binding positions include 435 to 437 (IGS) and Glu488. 5-methyltetrahydropteroyltri-L-glutamate is bound by residues 519–520 (RC) and Trp565. Residue Asp603 participates in L-homocysteine binding. Asp603 is an L-methionine binding site. Residue Glu609 participates in 5-methyltetrahydropteroyltri-L-glutamate binding. Zn(2+) contacts are provided by His645, Cys647, and Glu669. The Proton donor role is filled by His698. Cys730 serves as a coordination point for Zn(2+).

Belongs to the vitamin-B12 independent methionine synthase family. The cofactor is Zn(2+).

The enzyme catalyses 5-methyltetrahydropteroyltri-L-glutamate + L-homocysteine = tetrahydropteroyltri-L-glutamate + L-methionine. The protein operates within amino-acid biosynthesis; L-methionine biosynthesis via de novo pathway; L-methionine from L-homocysteine (MetE route): step 1/1. In terms of biological role, catalyzes the transfer of a methyl group from 5-methyltetrahydrofolate to homocysteine resulting in methionine formation. In Bacillus cereus (strain AH820), this protein is 5-methyltetrahydropteroyltriglutamate--homocysteine methyltransferase.